We begin with the raw amino-acid sequence, 149 residues long: MHCPFCFAVDTKVIDSRLVGEGSSVRRRRQCLVCNERFTTFEVAELVMPRVVKSNDVREPFNEEKLRSGMLRALEKRPVSSDDVEMAINHIKSQLRATGEREVPSKMIGNLVMEQLKKLDKVAYIRFASVYRSFEDIKEFGEEIARLED.

Residues 3-34 (CPFCFAVDTKVIDSRLVGEGSSVRRRRQCLVC) fold into a zinc finger. In terms of domain architecture, ATP-cone spans 49–139 (PRVVKSNDVR…VYRSFEDIKE (91 aa)).

The protein belongs to the NrdR family. Zn(2+) serves as cofactor.

Its function is as follows. Negatively regulates transcription of bacterial ribonucleotide reductase nrd genes and operons by binding to NrdR-boxes. The chain is Transcriptional repressor NrdR from Escherichia coli O139:H28 (strain E24377A / ETEC).